Here is a 698-residue protein sequence, read N- to C-terminus: Elongation factor G (698 aa).

Positions 8–290 (ERYRNIGISA…AVIELLPSPV (283 aa)) constitute a tr-type G domain. GTP contacts are provided by residues 17 to 24 (AHIDAGKT), 88 to 92 (DTPGH), and 142 to 145 (NKMD).

Belongs to the TRAFAC class translation factor GTPase superfamily. Classic translation factor GTPase family. EF-G/EF-2 subfamily.

The protein localises to the cytoplasm. Its function is as follows. Catalyzes the GTP-dependent ribosomal translocation step during translation elongation. During this step, the ribosome changes from the pre-translocational (PRE) to the post-translocational (POST) state as the newly formed A-site-bound peptidyl-tRNA and P-site-bound deacylated tRNA move to the P and E sites, respectively. Catalyzes the coordinated movement of the two tRNA molecules, the mRNA and conformational changes in the ribosome. The polypeptide is Elongation factor G (Aromatoleum aromaticum (strain DSM 19018 / LMG 30748 / EbN1) (Azoarcus sp. (strain EbN1))).